The following is a 226-amino-acid chain: E3 ubiquitin-protein ligase RNF186 (226 aa).

The RING-type zinc finger occupies 39–85 (CLVCREPYSGVRPPKLLGCQHAFCAVCLKLLLCVQDDAWSIPCPLCR). Positions 121–143 (GLANPATLTAGQPREAGEEEQDA) are disordered. Transmembrane regions (helical) follow at residues 157–177 (HLLL…PGVI) and 179–199 (WVLS…CSHP).

In terms of assembly, interacts with BNIP1. Polyubiquitinated. 'Lys-29' autoubiquitination leads to proteasomal degradation.

It localises to the endoplasmic reticulum membrane. The catalysed reaction is S-ubiquitinyl-[E2 ubiquitin-conjugating enzyme]-L-cysteine + [acceptor protein]-L-lysine = [E2 ubiquitin-conjugating enzyme]-L-cysteine + N(6)-ubiquitinyl-[acceptor protein]-L-lysine.. It participates in protein modification; protein ubiquitination. E3 ubiquitin protein ligase that is part of an apoptotic signaling pathway activated by endoplasmic reticulum stress. Stimulates the expression of proteins specific of the unfolded protein response (UPR), ubiquitinates BNIP1 and regulates its localization to the mitochondrion and induces calcium release from the endoplasmic reticulum that ultimately leads to cell apoptosis. Plays a role in the maintenance of intestinal homeostasis and clearance of enteric pathogens. Upon NOD2 stimulation, ubiquitinates the ER stress sensor activating transcription factor 6/ATF6 and promotes the unfolded protein response UPR. Participates in basal level of autophagy maintenance by regulating the ubiquitination of EPHB2. Upon stimulation by ligand EFNB1, ubiquitinates EPHB2 and further recruits MAP1LC3B for autophagy induction. Controls nutrient sensing by ubiquitinating Sestrin-2/SESN2, which is an intracellular sensor of cytosolic leucine and inhibitor of mTORC1 activity. The chain is E3 ubiquitin-protein ligase RNF186 from Bos taurus (Bovine).